The primary structure comprises 330 residues: Glycoprotein integral membrane protein 1 (330 aa).

The signal sequence occupies residues 1–23 (MEGAPLGPLALRLLLFVALPASG). Residues 24-268 (WLTTGAPEPP…VFPVFFQFLN (245 aa)) are Extracellular-facing. 4 N-linked (GlcNAc...) asparagine glycosylation sites follow: Asn46, Asn64, Asn166, and Asn191. The chain crosses the membrane as a helical span at residues 269–289 (IMVVGITGAAVVITILKVLFP). Over 290-330 (VSEYKGILQLDKVDVIPVTAINLYPDGPEKTAENLEDKTCI) the chain is Cytoplasmic.

It localises to the membrane. The polypeptide is Glycoprotein integral membrane protein 1 (GINM1) (Pongo abelii (Sumatran orangutan)).